We begin with the raw amino-acid sequence, 132 residues long: DNA-directed RNA polymerase subunit omega (132 aa).

This sequence belongs to the RNA polymerase subunit omega family. In terms of assembly, the RNAP catalytic core consists of 2 alpha, 1 beta, 1 beta' and 1 omega subunit. When a sigma factor is associated with the core the holoenzyme is formed, which can initiate transcription.

It carries out the reaction RNA(n) + a ribonucleoside 5'-triphosphate = RNA(n+1) + diphosphate. In terms of biological role, promotes RNA polymerase assembly. Latches the N- and C-terminal regions of the beta' subunit thereby facilitating its interaction with the beta and alpha subunits. The sequence is that of DNA-directed RNA polymerase subunit omega from Ehrlichia ruminantium (strain Welgevonden).